A 205-amino-acid chain; its full sequence is ATP synthase subunit b (205 aa).

Positions 1 to 27 are cleaved as a signal peptide; it reads MKLNKKHLVAILSVLSLSIIVVPLLTS. C28 carries the N-palmitoyl cysteine lipid modification. C28 carries the S-diacylglycerol cysteine lipid modification. Residues 48–68 form a helical membrane-spanning segment; the sequence is VWVFIAQVIAMCVVFSLVLWL.

This sequence belongs to the ATPase B chain family. In terms of assembly, F-type ATPases have 2 components, F(1) - the catalytic core - and F(0) - the membrane proton channel. F(1) has five subunits: alpha(3), beta(3), gamma(1), delta(1), epsilon(1). F(0) has three main subunits: a(1), b(2) and c(10-14). The alpha and beta chains form an alternating ring which encloses part of the gamma chain. F(1) is attached to F(0) by a central stalk formed by the gamma and epsilon chains, while a peripheral stalk is formed by the delta and b chains.

It is found in the cell membrane. F(1)F(0) ATP synthase produces ATP from ADP in the presence of a proton or sodium gradient. F-type ATPases consist of two structural domains, F(1) containing the extramembraneous catalytic core and F(0) containing the membrane proton channel, linked together by a central stalk and a peripheral stalk. During catalysis, ATP synthesis in the catalytic domain of F(1) is coupled via a rotary mechanism of the central stalk subunits to proton translocation. In terms of biological role, component of the F(0) channel, it forms part of the peripheral stalk, linking F(1) to F(0). This Ureaplasma parvum serovar 3 (strain ATCC 27815 / 27 / NCTC 11736) protein is ATP synthase subunit b.